We begin with the raw amino-acid sequence, 304 residues long: Protoheme IX farnesyltransferase 1 (304 aa).

The next 8 helical transmembrane spans lie at 24-44 (VVVLMLITSLIGMLLATKAPL), 47-67 (FVPWQVLIFGNLGIGLCAGAA), 99-119 (MALGFALLLALAGMAVLLAFT), 122-142 (LTAWLTLASLLGYAALYTGFL), 150-170 (IVIGGLAGAAPPLLGWVAITG), 176-196 (PLLLVLIIFAWTPPHFWALCI), 228-248 (LVLFAVSLMPFVIHMSGLVYL), and 280-300 (YSIVYLFLLFMALLVDHYLPL).

The protein belongs to the UbiA prenyltransferase family. Protoheme IX farnesyltransferase subfamily.

It is found in the cell inner membrane. It carries out the reaction heme b + (2E,6E)-farnesyl diphosphate + H2O = Fe(II)-heme o + diphosphate. It functions in the pathway porphyrin-containing compound metabolism; heme O biosynthesis; heme O from protoheme: step 1/1. Functionally, converts heme B (protoheme IX) to heme O by substitution of the vinyl group on carbon 2 of heme B porphyrin ring with a hydroxyethyl farnesyl side group. In Pseudomonas aeruginosa (strain UCBPP-PA14), this protein is Protoheme IX farnesyltransferase 1.